A 1056-amino-acid polypeptide reads, in one-letter code: Contactin-5 (1056 aa).

Low complexity predominate over residues 1 to 14; it reads MKADSSSSSSMSSR. A disordered region spans residues 1–33; the sequence is MKADSSSSSSMSSRMRLRNSHGVGSSSQDWSPF. Residues 22–31 are compositionally biased toward polar residues; it reads GVGSSSQDWS. 6 Ig-like C2-type domains span residues 57–142, 154–240, 258–343, 348–432, 438–519, and 527–622; these read PVFI…IVLS, PFSG…RVLS, PKIE…GHLQ, PQWI…AELK, PMFN…AELT, and PMRV…AELL. 3 disulfides stabilise this stretch: cysteine 81-cysteine 131, cysteine 175-cysteine 227, and cysteine 280-cysteine 327. Asparagine 96 and asparagine 119 each carry an N-linked (GlcNAc...) asparagine glycan. The N-linked (GlcNAc...) asparagine glycan is linked to asparagine 355. 3 disulfide bridges follow: cysteine 369–cysteine 416, cysteine 459–cysteine 507, and cysteine 549–cysteine 606. N-linked (GlcNAc...) asparagine glycosylation is found at asparagine 489 and asparagine 496. Fibronectin type-III domains follow at residues 629 to 727, 732 to 829, 834 to 928, and 933 to 1023; these read PPGV…TKEA, APAN…SAEG, PPSE…TKKN, and PPGN…TSSG. The interval 711–736 is disordered; it reads GTGDPSPPSRAVRTKEAVPSVAPANV. 4 N-linked (GlcNAc...) asparagine glycosylation sites follow: asparagine 772, asparagine 887, asparagine 945, and asparagine 958. Residue asparagine 1035 is the site of GPI-anchor amidated asparagine attachment. The propeptide at 1036–1056 is removed in mature form; the sequence is SPPGLAWTALFLSLMVPSFPL.

This sequence belongs to the immunoglobulin superfamily. Contactin family.

Its subcellular location is the cell membrane. In terms of biological role, contactins mediate cell surface interactions during nervous system development. This Danio rerio (Zebrafish) protein is Contactin-5 (cntn5).